Reading from the N-terminus, the 303-residue chain is Probable cat1 operon transcriptional activator (303 aa).

The region spanning 1–58 (MDLRQFRYFVAVARERNFTRAARQLNIAQPPLSRQIQLLEEEVGVPLLIRNSRPVQLT) is the HTH lysR-type domain. The segment at residues 18–37 (FTRAARQLNIAQPPLSRQIQ) is a DNA-binding region (H-T-H motif).

The protein belongs to the LysR transcriptional regulatory family.

Probable positive regulator of the cat1 operon which encode enzymes responsible for the degradation of catechol to acetyl-CoA via the beta-ketoadipate pathway. The polypeptide is Probable cat1 operon transcriptional activator (Acinetobacter lwoffii).